The chain runs to 323 residues: Melanocortin receptor 3 (323 aa).

At 1–37 the chain is on the extracellular side; that stretch reads MNSSCCPSSSYPTLPNLSQHPAAPSASNRSGSGFCEQ. N-linked (GlcNAc...) asparagine glycans are attached at residues asparagine 2, asparagine 16, and asparagine 28. Residues 38-63 traverse the membrane as a helical segment; the sequence is VFIKPEVFLALGIVSLMENILVILAV. At 64–75 the chain is on the cytoplasmic side; sequence VRNGNLHSPMYF. Residues 76-100 form a helical membrane-spanning segment; sequence FLCSLAAADMLVSLSNSLETIMIVV. At 101–118 the chain is on the extracellular side; that stretch reads INSDSLTLEDQFIQHMDN. A helical membrane pass occupies residues 119 to 140; it reads IFDSMICISLVASICNLLAIAV. Residues 141–160 lie on the Cytoplasmic side of the membrane; sequence DRYVTIFYALRYHSIMTVRK. The helical transmembrane segment at 161-181 threads the bilayer; it reads ALSLIVAIWVCCGICGVMFIV. The Extracellular portion of the chain corresponds to 182-186; sequence YSESK. Residues 187 to 210 traverse the membrane as a helical segment; sequence MVIVCLITMFFAMVLLMGTLYIHM. At 211-245 the chain is on the cytoplasmic side; that stretch reads FLFARLHVQRIAALPPADGVAPQQHSCMKGAVTIT. Residues 246-268 form a helical membrane-spanning segment; that stretch reads ILLGVFIFCWAPFFLHLVLIITC. Residues 269 to 277 lie on the Extracellular side of the membrane; the sequence is PTNPYCICY. A helical membrane pass occupies residues 278–301; that stretch reads TAHFNTYLVLIMCNSVIDPLIYAF. Over 302–323 the chain is Cytoplasmic; it reads RSLELRNTFKEILCGCNGMNVG. The S-palmitoyl cysteine moiety is linked to residue cysteine 315.

This sequence belongs to the G-protein coupled receptor 1 family. Brain.

The protein resides in the cell membrane. In terms of biological role, receptor for MSH (alpha, beta and gamma) and ACTH. This receptor is mediated by G proteins which activate adenylate cyclase. Required for expression of anticipatory patterns of activity and wakefulness during periods of limited nutrient availability and for the normal regulation of circadian clock activity in the brain. In Rattus norvegicus (Rat), this protein is Melanocortin receptor 3 (Mc3r).